Here is a 479-residue protein sequence, read N- to C-terminus: Ribosomal RNA small subunit methyltransferase F (479 aa).

S-adenosyl-L-methionine is bound by residues 125–131 (AAAPGSK), Glu-149, Asp-176, and Asp-194. The Nucleophile role is filled by Cys-247.

The protein belongs to the class I-like SAM-binding methyltransferase superfamily. RsmB/NOP family.

The protein resides in the cytoplasm. The enzyme catalyses cytidine(1407) in 16S rRNA + S-adenosyl-L-methionine = 5-methylcytidine(1407) in 16S rRNA + S-adenosyl-L-homocysteine + H(+). Its function is as follows. Specifically methylates the cytosine at position 1407 (m5C1407) of 16S rRNA. The protein is Ribosomal RNA small subunit methyltransferase F of Shigella sonnei (strain Ss046).